Consider the following 304-residue polypeptide: tRNA pseudouridine synthase B (304 aa).

Aspartate 38 acts as the Nucleophile in catalysis.

Belongs to the pseudouridine synthase TruB family. Type 1 subfamily.

It catalyses the reaction uridine(55) in tRNA = pseudouridine(55) in tRNA. Responsible for synthesis of pseudouridine from uracil-55 in the psi GC loop of transfer RNAs. This is tRNA pseudouridine synthase B from Geobacter sulfurreducens (strain ATCC 51573 / DSM 12127 / PCA).